The chain runs to 195 residues: NADH-quinone oxidoreductase subunit I (195 aa).

2 4Fe-4S ferredoxin-type domains span residues leucine 44–alanine 74 and glutamine 90–glutamate 119. Residues cysteine 54, cysteine 57, cysteine 60, cysteine 64, cysteine 99, cysteine 102, cysteine 105, and cysteine 109 each coordinate [4Fe-4S] cluster. A disordered region spans residues methionine 145 to lysine 195. The segment covering alanine 168–glutamate 181 has biased composition (low complexity). The segment covering alanine 184 to lysine 195 has biased composition (basic and acidic residues).

It belongs to the complex I 23 kDa subunit family. NDH-1 is composed of 14 different subunits. Subunits NuoA, H, J, K, L, M, N constitute the membrane sector of the complex. It depends on [4Fe-4S] cluster as a cofactor.

The protein resides in the cell membrane. It carries out the reaction a quinone + NADH + 5 H(+)(in) = a quinol + NAD(+) + 4 H(+)(out). Functionally, NDH-1 shuttles electrons from NADH, via FMN and iron-sulfur (Fe-S) centers, to quinones in the respiratory chain. The immediate electron acceptor for the enzyme in this species is believed to be ubiquinone. Couples the redox reaction to proton translocation (for every two electrons transferred, four hydrogen ions are translocated across the cytoplasmic membrane), and thus conserves the redox energy in a proton gradient. This is NADH-quinone oxidoreductase subunit I from Rhodococcus erythropolis (strain PR4 / NBRC 100887).